Consider the following 596-residue polypeptide: Aspartate--tRNA(Asp/Asn) ligase (596 aa).

L-aspartate is bound at residue Glu-172. Residues 196 to 199 (QLFK) are aspartate. Position 218 (Arg-218) interacts with L-aspartate. Residues 218-220 (RDE) and Gln-227 each bind ATP. His-450 is an L-aspartate binding site. Glu-484 contacts ATP. Arg-491 provides a ligand contact to L-aspartate. ATP is bound at residue 536 to 539 (GLDR).

It belongs to the class-II aminoacyl-tRNA synthetase family. Type 1 subfamily. In terms of assembly, homodimer.

The protein localises to the cytoplasm. The enzyme catalyses tRNA(Asx) + L-aspartate + ATP = L-aspartyl-tRNA(Asx) + AMP + diphosphate. Aspartyl-tRNA synthetase with relaxed tRNA specificity since it is able to aspartylate not only its cognate tRNA(Asp) but also tRNA(Asn). Reaction proceeds in two steps: L-aspartate is first activated by ATP to form Asp-AMP and then transferred to the acceptor end of tRNA(Asp/Asn). In Acidithiobacillus ferrooxidans (strain ATCC 23270 / DSM 14882 / CIP 104768 / NCIMB 8455) (Ferrobacillus ferrooxidans (strain ATCC 23270)), this protein is Aspartate--tRNA(Asp/Asn) ligase.